We begin with the raw amino-acid sequence, 433 residues long: L-2-hydroxyglutarate dehydrogenase, mitochondrial (433 aa).

This sequence belongs to the L2HGDH family. FAD serves as cofactor.

It localises to the mitochondrion. The enzyme catalyses (S)-2-hydroxyglutarate + A = 2-oxoglutarate + AH2. The protein is L-2-hydroxyglutarate dehydrogenase, mitochondrial of Caenorhabditis elegans.